Here is a 267-residue protein sequence, read N- to C-terminus: UPF0173 metal-dependent hydrolase THEYE_A0282 (267 aa).

The protein belongs to the UPF0173 family.

This Thermodesulfovibrio yellowstonii (strain ATCC 51303 / DSM 11347 / YP87) protein is UPF0173 metal-dependent hydrolase THEYE_A0282.